Here is a 931-residue protein sequence, read N- to C-terminus: Up-regulator of cell proliferation (931 aa).

Phosphoserine is present on Ser-3. The 241-residue stretch at 689 to 929 folds into the VLIG-type G domain; sequence RSRLVVLSTV…NIQQLIELVR (241 aa).

Belongs to the TRAFAC class dynamin-like GTPase superfamily. Very large inducible GTPase (VLIG) family. In terms of tissue distribution, strongly expressed in hepatitis B virus-infected liver and in HCC cells. Also highly expressed in well-differentiated gastric cancer tissues and various gastric cancer cell lines.

It is found in the cytoplasm. The protein resides in the nucleus. Functionally, may be involved in cell cycle progression through the regulation of cyclin D1 expression. May participate in the development of hepatocellular carcinoma (HCC) by promoting hepatocellular growth and survival. May play an important role in development of gastric cancer. This is Up-regulator of cell proliferation (URGCP) from Homo sapiens (Human).